The following is a 303-amino-acid chain: UDP-3-O-acyl-N-acetylglucosamine deacetylase (303 aa).

Zn(2+) is bound by residues His78, His237, and Asp241. Catalysis depends on His264, which acts as the Proton donor.

It belongs to the LpxC family. Zn(2+) is required as a cofactor.

It carries out the reaction a UDP-3-O-[(3R)-3-hydroxyacyl]-N-acetyl-alpha-D-glucosamine + H2O = a UDP-3-O-[(3R)-3-hydroxyacyl]-alpha-D-glucosamine + acetate. It functions in the pathway glycolipid biosynthesis; lipid IV(A) biosynthesis; lipid IV(A) from (3R)-3-hydroxytetradecanoyl-[acyl-carrier-protein] and UDP-N-acetyl-alpha-D-glucosamine: step 2/6. Functionally, catalyzes the hydrolysis of UDP-3-O-myristoyl-N-acetylglucosamine to form UDP-3-O-myristoylglucosamine and acetate, the committed step in lipid A biosynthesis. This Xanthomonas axonopodis pv. citri (strain 306) protein is UDP-3-O-acyl-N-acetylglucosamine deacetylase.